The sequence spans 417 residues: MKFTELTVKEFENFVQNPSLESHYFQVKENIATRESDGFQVVLLGVKDDDNRVIAASLFSKIPTMGSYVYYSNRGPVMDYSDLGLVDFYLKELDKYLHQHQCLYVKLDPYWLYQVYDKDINPLTEKNDALVNLFKSHGYDHHGFTTQYDSSSQVRWMGVLDLEGKTPASLRKEFDSQRKRNINKAINYGVKVRFLSKDEFDLFLDLYRETEARTGFASKTDDYFYNFIEHYGDKVLVPLAYIDLNEYIQHLQESLNDKENRRDDMMAKENKTDKQLKKIAELDKQIDHDKKELLQASELRQTDGEILNLASGVYFANAYEVNYFSGGSSEKYNQYMGPYAMHWHMINYCFDNGYDRYNFYGLSGDFTENSEDYGVYRFKRGFNVRIEELIGDFYKPINKVKYWLFNTLDRIRNKLKK.

This sequence belongs to the FemABX family.

The protein resides in the cytoplasm. It catalyses the reaction MurNAc-L-Ala-D-isoglutaminyl-L-Lys-(N(6)-tri-Gly)-D-Ala-D-Ala-diphospho-di-trans,octa-cis-undecaprenyl-GlcNAc + 2 glycyl-tRNA(Gly) = MurNAc-L-Ala-D-isoglutaminyl-L-Lys-(N(6)-penta-Gly)-D-Ala-D-Ala-diphospho-di-trans,octa-cis-undecaprenyl-GlcNAc + 2 tRNA(Gly) + 2 H(+). Catalyzes the incorporation of amino acid(s) into the interchain peptide bridge of peptidoglycan, using aminoacyl-tRNA as amino acid donor. This chain is Aminoacyltransferase FemB (femB), found in Staphylococcus epidermidis (strain ATCC 35984 / DSM 28319 / BCRC 17069 / CCUG 31568 / BM 3577 / RP62A).